A 163-amino-acid chain; its full sequence is Interleukin-31 (163 aa).

The first 23 residues, 1–23 (MIFHTGTTKPTLVLLCCIGTWLA), serve as a signal peptide directing secretion. N55, N84, and N124 each carry an N-linked (GlcNAc...) asparagine glycan.

It is found in the secreted. Activates STAT3 and possibly STAT1 and STAT5 through the IL31 heterodimeric receptor composed of IL31RA and OSMR. May function in skin immunity. Enhances myeloid progenitor cell survival in vitro. Induces RETNLA and serum amyloid A protein expression in macrophages. This chain is Interleukin-31 (Il31), found in Mus musculus (Mouse).